The primary structure comprises 492 residues: 2-succinylbenzoate--CoA ligase (492 aa).

It belongs to the ATP-dependent AMP-binding enzyme family. MenE subfamily.

The catalysed reaction is 2-succinylbenzoate + ATP + CoA = 2-succinylbenzoyl-CoA + AMP + diphosphate. Its pathway is quinol/quinone metabolism; 1,4-dihydroxy-2-naphthoate biosynthesis; 1,4-dihydroxy-2-naphthoate from chorismate: step 5/7. It participates in quinol/quinone metabolism; menaquinone biosynthesis. Converts 2-succinylbenzoate (OSB) to 2-succinylbenzoyl-CoA (OSB-CoA). This is 2-succinylbenzoate--CoA ligase from Staphylococcus aureus (strain USA300 / TCH1516).